The primary structure comprises 521 residues: Probable cytochrome P450 12d1 distal, mitochondrial (521 aa).

The N-terminal 19 residues, 1-19 (MNTLSSARSVAIYVGPVRS), are a transit peptide targeting the mitochondrion. Position 467 (Cys-467) interacts with heme.

This sequence belongs to the cytochrome P450 family. Requires heme as cofactor.

The protein resides in the mitochondrion membrane. The protein is Probable cytochrome P450 12d1 distal, mitochondrial of Drosophila melanogaster (Fruit fly).